A 249-amino-acid polypeptide reads, in one-letter code: Coproheme decarboxylase (249 aa).

Fe-coproporphyrin III contacts are provided by residues R131, 145–149 (YPMDK), H172, and Q185. Y145 is an active-site residue.

The protein belongs to the ChdC family. Type 1 subfamily. Fe-coproporphyrin III serves as cofactor.

The enzyme catalyses Fe-coproporphyrin III + 2 H2O2 + 2 H(+) = heme b + 2 CO2 + 4 H2O. It carries out the reaction Fe-coproporphyrin III + H2O2 + H(+) = harderoheme III + CO2 + 2 H2O. It catalyses the reaction harderoheme III + H2O2 + H(+) = heme b + CO2 + 2 H2O. The protein operates within porphyrin-containing compound metabolism; protoheme biosynthesis. Involved in coproporphyrin-dependent heme b biosynthesis. Catalyzes the decarboxylation of Fe-coproporphyrin III (coproheme) to heme b (protoheme IX), the last step of the pathway. The reaction occurs in a stepwise manner with a three-propionate intermediate. The chain is Coproheme decarboxylase from Staphylococcus haemolyticus (strain JCSC1435).